A 250-amino-acid polypeptide reads, in one-letter code: Triosephosphate isomerase (250 aa).

2 residues coordinate substrate: Asn-10 and Lys-12. Residue His-94 is the Electrophile of the active site. Glu-167 acts as the Proton acceptor in catalysis.

This sequence belongs to the triosephosphate isomerase family. As to quaternary structure, homodimer.

It is found in the cytoplasm. The catalysed reaction is D-glyceraldehyde 3-phosphate = dihydroxyacetone phosphate. It participates in carbohydrate biosynthesis; gluconeogenesis. It functions in the pathway carbohydrate degradation; glycolysis; D-glyceraldehyde 3-phosphate from glycerone phosphate: step 1/1. The sequence is that of Triosephosphate isomerase from Taenia solium (Pork tapeworm).